The primary structure comprises 116 residues: Putative pterin-4-alpha-carbinolamine dehydratase (116 aa).

It belongs to the pterin-4-alpha-carbinolamine dehydratase family.

It catalyses the reaction (4aS,6R)-4a-hydroxy-L-erythro-5,6,7,8-tetrahydrobiopterin = (6R)-L-erythro-6,7-dihydrobiopterin + H2O. This Paracidovorax citrulli (strain AAC00-1) (Acidovorax citrulli) protein is Putative pterin-4-alpha-carbinolamine dehydratase.